We begin with the raw amino-acid sequence, 218 residues long: Glutathione S-transferase class-mu 26 kDa isozyme (218 aa).

The GST N-terminal domain maps to 2–83 (SPILGYWKIK…YIADKHNMLG (82 aa)). Residues 7 to 8 (YW), 41 to 45 (WRNKK), 54 to 55 (NL), and 67 to 68 (QS) each bind glutathione. The 119-residue stretch at 85–203 (CPKERAEISM…KSSKYIAWPL (119 aa)) folds into the GST C-terminal domain. Substrate is bound at residue tyrosine 111.

The protein belongs to the GST superfamily. Mu family. As to quaternary structure, homodimer.

The enzyme catalyses RX + glutathione = an S-substituted glutathione + a halide anion + H(+). In terms of biological role, conjugation of reduced glutathione to a wide number of exogenous and endogenous hydrophobic electrophiles. Functionally, GST isoenzymes appear to play a central role in the parasite detoxification system. Other functions are also suspected including a role in increasing the solubility of haematin in the parasite gut. This chain is Glutathione S-transferase class-mu 26 kDa isozyme, found in Schistosoma japonicum (Blood fluke).